Here is a 237-residue protein sequence, read N- to C-terminus: Large ribosomal subunit protein uL1 (237 aa).

It belongs to the universal ribosomal protein uL1 family. Part of the 50S ribosomal subunit.

In terms of biological role, binds directly to 23S rRNA. The L1 stalk is quite mobile in the ribosome, and is involved in E site tRNA release. Its function is as follows. Protein L1 is also a translational repressor protein, it controls the translation of the L11 operon by binding to its mRNA. In Synechococcus sp. (strain ATCC 27144 / PCC 6301 / SAUG 1402/1) (Anacystis nidulans), this protein is Large ribosomal subunit protein uL1.